Here is a 331-residue protein sequence, read N- to C-terminus: NADH-quinone oxidoreductase subunit H (331 aa).

Transmembrane regions (helical) follow at residues alanine 7–isoleucine 27, methionine 81–valine 101, isoleucine 114–glycine 134, isoleucine 154–phenylalanine 174, valine 187–valine 207, phenylalanine 238–phenylalanine 258, tryptophan 271–isoleucine 291, and valine 310–alanine 330.

Belongs to the complex I subunit 1 family. As to quaternary structure, NDH-1 is composed of 13 different subunits. Subunits NuoA, H, J, K, L, M, N constitute the membrane sector of the complex.

The protein localises to the cell inner membrane. The enzyme catalyses a quinone + NADH + 5 H(+)(in) = a quinol + NAD(+) + 4 H(+)(out). Functionally, NDH-1 shuttles electrons from NADH, via FMN and iron-sulfur (Fe-S) centers, to quinones in the respiratory chain. The immediate electron acceptor for the enzyme in this species is believed to be ubiquinone. Couples the redox reaction to proton translocation (for every two electrons transferred, four hydrogen ions are translocated across the cytoplasmic membrane), and thus conserves the redox energy in a proton gradient. This subunit may bind ubiquinone. The polypeptide is NADH-quinone oxidoreductase subunit H (Pseudomonas paraeruginosa (strain DSM 24068 / PA7) (Pseudomonas aeruginosa (strain PA7))).